The primary structure comprises 353 residues: Protein AC18 (353 aa).

Its subcellular location is the host nucleus. The protein resides in the host cytoplasm. In terms of biological role, may play a role in occlusion-derived virions (ODV) formation and/or regulation of late viral gene expression. This chain is Protein AC18 (DA41), found in Autographa californica nuclear polyhedrosis virus (AcMNPV).